The chain runs to 243 residues: MIRLIFLDIDKTLIPGYEPDPAKPIIEELKDMGFEIIFNSSKTRAEQEYYRKELEVETPFISENGSAIFIPKGYFPFDVKGKEVGNYIVIELGIRVEKIREELKKLENIYGLKYYGNSTKEEIEKFTGMPPELVPLAMEREYSETIFEWSRDGWEEVLVEGGFKVTMGSRFYTVHGNSDKGKAAKILLDFYKRLGQIESYAVGDSYNDFPMFEVVDKAFIVGSLKHKKAQNVSSIIDVLEVIK.

D8 functions as the Nucleophile in the catalytic mechanism. Mg(2+) contacts are provided by D8, D10, S169, and D204.

It belongs to the HAD-like hydrolase superfamily. MPGP family. Mg(2+) is required as a cofactor.

The protein localises to the cytoplasm. The catalysed reaction is 2-O-(alpha-D-mannosyl)-3-phosphoglycerate + H2O = (2R)-2-O-(alpha-D-mannosyl)-glycerate + phosphate. Its pathway is carbohydrate biosynthesis; 2-(alpha-D-mannosyl)-D-glycerate biosynthesis; 2-(alpha-D-mannosyl)-D-glycerate from GDP-alpha-D-mannose (MPG route): step 2/2. Its function is as follows. Hydrolyzes mannosyl-3-phosphoglycerate (MPG) to form the osmolyte mannosylglycerate (MG). The enzyme is absolutely specific for MPG. This is Mannosyl-3-phosphoglycerate phosphatase from Pyrococcus horikoshii (strain ATCC 700860 / DSM 12428 / JCM 9974 / NBRC 100139 / OT-3).